A 389-amino-acid chain; its full sequence is NADH-dependent butanol dehydrogenase A (389 aa).

The protein belongs to the iron-containing alcohol dehydrogenase family. Homodimer.

It participates in alcohol metabolism; butanol biosynthesis. The sequence is that of NADH-dependent butanol dehydrogenase A (bdhA) from Clostridium acetobutylicum (strain ATCC 824 / DSM 792 / JCM 1419 / IAM 19013 / LMG 5710 / NBRC 13948 / NRRL B-527 / VKM B-1787 / 2291 / W).